Reading from the N-terminus, the 154-residue chain is Myoglobin (154 aa).

Positions 2-148 constitute a Globin domain; it reads VLSDAEWQLV…FRKDIAAKYK (147 aa). Ser-4 carries the post-translational modification Phosphoserine. His-65 lines the nitrite pocket. His-65 is an O2 binding site. Thr-68 is subject to Phosphothreonine. Residue His-94 coordinates heme b.

This sequence belongs to the globin family. As to quaternary structure, monomeric.

The protein localises to the cytoplasm. Its subcellular location is the sarcoplasm. The catalysed reaction is Fe(III)-heme b-[protein] + nitric oxide + H2O = Fe(II)-heme b-[protein] + nitrite + 2 H(+). The enzyme catalyses H2O2 + AH2 = A + 2 H2O. Monomeric heme protein which primary function is to store oxygen and facilitate its diffusion within muscle tissues. Reversibly binds oxygen through a pentacoordinated heme iron and enables its timely and efficient release as needed during periods of heightened demand. Depending on the oxidative conditions of tissues and cells, and in addition to its ability to bind oxygen, it also has a nitrite reductase activity whereby it regulates the production of bioactive nitric oxide. Under stress conditions, like hypoxia and anoxia, it also protects cells against reactive oxygen species thanks to its pseudoperoxidase activity. In Eschrichtius robustus (California gray whale), this protein is Myoglobin (MB).